A 54-amino-acid chain; its full sequence is Ribulose bisphosphate carboxylase large chain (54 aa).

Residues 1-2 (MS) constitute a propeptide that is removed on maturation. Proline 3 is subject to N-acetylproline. Lysine 14 carries the N6,N6,N6-trimethyllysine modification.

The protein belongs to the RuBisCO large chain family. Type I subfamily. Heterohexadecamer of 8 large chains and 8 small chains.

The protein localises to the plastid. Its subcellular location is the chloroplast. It catalyses the reaction 2 (2R)-3-phosphoglycerate + 2 H(+) = D-ribulose 1,5-bisphosphate + CO2 + H2O. The enzyme catalyses D-ribulose 1,5-bisphosphate + O2 = 2-phosphoglycolate + (2R)-3-phosphoglycerate + 2 H(+). Functionally, ruBisCO catalyzes two reactions: the carboxylation of D-ribulose 1,5-bisphosphate, the primary event in carbon dioxide fixation, as well as the oxidative fragmentation of the pentose substrate in the photorespiration process. Both reactions occur simultaneously and in competition at the same active site. This is Ribulose bisphosphate carboxylase large chain (rbcL) from Colletia hystrix (Crucifixion thorn).